The following is a 154-amino-acid chain: S-ribosylhomocysteine lyase (154 aa).

Fe cation is bound by residues H57, H61, and C124.

This sequence belongs to the LuxS family. As to quaternary structure, homodimer. Requires Fe cation as cofactor.

The enzyme catalyses S-(5-deoxy-D-ribos-5-yl)-L-homocysteine = (S)-4,5-dihydroxypentane-2,3-dione + L-homocysteine. Its function is as follows. Involved in the synthesis of autoinducer 2 (AI-2) which is secreted by bacteria and is used to communicate both the cell density and the metabolic potential of the environment. The regulation of gene expression in response to changes in cell density is called quorum sensing. Catalyzes the transformation of S-ribosylhomocysteine (RHC) to homocysteine (HC) and 4,5-dihydroxy-2,3-pentadione (DPD). The sequence is that of S-ribosylhomocysteine lyase from Exiguobacterium sibiricum (strain DSM 17290 / CCUG 55495 / CIP 109462 / JCM 13490 / 255-15).